The chain runs to 146 residues: Single-stranded DNA-binding protein 1-A, mitochondrial (146 aa).

The N-terminal 17 residues, 1–17 (MFHRPALQVFRQFARCQ), are a transit peptide targeting the mitochondrion. Positions 28–140 (INKVQLLGRV…IIADNIIFLS (113 aa)) constitute an SSB domain.

Homotetramer.

The protein resides in the mitochondrion. It is found in the mitochondrion matrix. The protein localises to the mitochondrion nucleoid. Functionally, binds preferentially and cooperatively to pyrimidine rich single-stranded DNA (ss-DNA). Required to maintain the copy number of mitochondrial DNA (mtDNA) and plays crucial roles during mtDNA replication that stimulate activity of the DNA polymerase at the replication fork. May also function in mtDNA repair. This chain is Single-stranded DNA-binding protein 1-A, mitochondrial (ssbp1-a), found in Xenopus laevis (African clawed frog).